Reading from the N-terminus, the 460-residue chain is Bifunctional protein GlmU (460 aa).

The segment at 1–229 (MSHYAIILAA…FEESLGVNDR (229 aa)) is pyrophosphorylase. UDP-N-acetyl-alpha-D-glucosamine-binding positions include 8 to 11 (LAAG), K22, Q72, and 77 to 78 (GT). D102 serves as a coordination point for Mg(2+). UDP-N-acetyl-alpha-D-glucosamine is bound by residues G139, E154, N169, and N227. N227 is a binding site for Mg(2+). Residues 230-250 (VALATAEDVMRRRINKAHMIN) form a linker region. The interval 251-460 (GVTFQNPNAT…KKPHHPSQQK (210 aa)) is N-acetyltransferase. The UDP-N-acetyl-alpha-D-glucosamine site is built by R332 and K350. H362 acts as the Proton acceptor in catalysis. UDP-N-acetyl-alpha-D-glucosamine-binding residues include Y365 and N376. Acetyl-CoA is bound by residues A379, 385-386 (NY), S404, A422, and R439.

The protein in the N-terminal section; belongs to the N-acetylglucosamine-1-phosphate uridyltransferase family. It in the C-terminal section; belongs to the transferase hexapeptide repeat family. As to quaternary structure, homotrimer. Mg(2+) serves as cofactor.

Its subcellular location is the cytoplasm. It carries out the reaction alpha-D-glucosamine 1-phosphate + acetyl-CoA = N-acetyl-alpha-D-glucosamine 1-phosphate + CoA + H(+). It catalyses the reaction N-acetyl-alpha-D-glucosamine 1-phosphate + UTP + H(+) = UDP-N-acetyl-alpha-D-glucosamine + diphosphate. It functions in the pathway nucleotide-sugar biosynthesis; UDP-N-acetyl-alpha-D-glucosamine biosynthesis; N-acetyl-alpha-D-glucosamine 1-phosphate from alpha-D-glucosamine 6-phosphate (route II): step 2/2. The protein operates within nucleotide-sugar biosynthesis; UDP-N-acetyl-alpha-D-glucosamine biosynthesis; UDP-N-acetyl-alpha-D-glucosamine from N-acetyl-alpha-D-glucosamine 1-phosphate: step 1/1. It participates in bacterial outer membrane biogenesis; LPS lipid A biosynthesis. In terms of biological role, catalyzes the last two sequential reactions in the de novo biosynthetic pathway for UDP-N-acetylglucosamine (UDP-GlcNAc). The C-terminal domain catalyzes the transfer of acetyl group from acetyl coenzyme A to glucosamine-1-phosphate (GlcN-1-P) to produce N-acetylglucosamine-1-phosphate (GlcNAc-1-P), which is converted into UDP-GlcNAc by the transfer of uridine 5-monophosphate (from uridine 5-triphosphate), a reaction catalyzed by the N-terminal domain. The polypeptide is Bifunctional protein GlmU (Streptococcus thermophilus (strain CNRZ 1066)).